A 200-amino-acid polypeptide reads, in one-letter code: Holliday junction branch migration complex subunit RuvA (200 aa).

Residues 1–64 are domain I; the sequence is MIGHLRGIIV…EDAHTLYGFH (64 aa). Positions 65-143 are domain II; that stretch reads NDHERRLFRA…RWHTNDTPSP (79 aa). A flexible linker region spans residues 144 to 148; the sequence is EGLRS. The tract at residues 149-200 is domain III; sequence SNTQPTQDAISALMALGYKPQEAKRAIDAIQKPDLSAETLIRLALKQMVLGT.

This sequence belongs to the RuvA family. In terms of assembly, homotetramer. Forms an RuvA(8)-RuvB(12)-Holliday junction (HJ) complex. HJ DNA is sandwiched between 2 RuvA tetramers; dsDNA enters through RuvA and exits via RuvB. An RuvB hexamer assembles on each DNA strand where it exits the tetramer. Each RuvB hexamer is contacted by two RuvA subunits (via domain III) on 2 adjacent RuvB subunits; this complex drives branch migration. In the full resolvosome a probable DNA-RuvA(4)-RuvB(12)-RuvC(2) complex forms which resolves the HJ.

Its subcellular location is the cytoplasm. In terms of biological role, the RuvA-RuvB-RuvC complex processes Holliday junction (HJ) DNA during genetic recombination and DNA repair, while the RuvA-RuvB complex plays an important role in the rescue of blocked DNA replication forks via replication fork reversal (RFR). RuvA specifically binds to HJ cruciform DNA, conferring on it an open structure. The RuvB hexamer acts as an ATP-dependent pump, pulling dsDNA into and through the RuvAB complex. HJ branch migration allows RuvC to scan DNA until it finds its consensus sequence, where it cleaves and resolves the cruciform DNA. This chain is Holliday junction branch migration complex subunit RuvA, found in Coxiella burnetii (strain CbuG_Q212) (Coxiella burnetii (strain Q212)).